A 701-amino-acid chain; its full sequence is Polyribonucleotide nucleotidyltransferase (701 aa).

Residues Asp-485 and Asp-491 each coordinate Mg(2+). The 60-residue stretch at 552 to 611 (PKIFKTTVDPEKIRDIIGPGGKMINKIIAKTNVKIDIEPDGRIFVAAPDDISGNRAISMI) folds into the KH domain. The 69-residue stretch at 621–689 (GQFFLGKVTR…RLGRIALSRK (69 aa)) folds into the S1 motif domain.

This sequence belongs to the polyribonucleotide nucleotidyltransferase family. The cofactor is Mg(2+).

It localises to the cytoplasm. The catalysed reaction is RNA(n+1) + phosphate = RNA(n) + a ribonucleoside 5'-diphosphate. Functionally, involved in mRNA degradation. Catalyzes the phosphorolysis of single-stranded polyribonucleotides processively in the 3'- to 5'-direction. The polypeptide is Polyribonucleotide nucleotidyltransferase (Caldicellulosiruptor saccharolyticus (strain ATCC 43494 / DSM 8903 / Tp8T 6331)).